A 237-amino-acid chain; its full sequence is Sugar fermentation stimulation protein homolog (237 aa).

The protein belongs to the SfsA family.

This chain is Sugar fermentation stimulation protein homolog, found in Pseudomonas putida (strain ATCC 47054 / DSM 6125 / CFBP 8728 / NCIMB 11950 / KT2440).